The sequence spans 119 residues: Large ribosomal subunit protein bL20 (119 aa).

Belongs to the bacterial ribosomal protein bL20 family.

Binds directly to 23S ribosomal RNA and is necessary for the in vitro assembly process of the 50S ribosomal subunit. It is not involved in the protein synthesizing functions of that subunit. The polypeptide is Large ribosomal subunit protein bL20 (Nitrosomonas europaea (strain ATCC 19718 / CIP 103999 / KCTC 2705 / NBRC 14298)).